We begin with the raw amino-acid sequence, 631 residues long: uncharacterized protein (631 aa).

Residues 1-20 (MVRFVSILSLFGCAATLVTA) form the signal peptide. The Lumenal portion of the chain corresponds to 21–105 (HDDMDMDMDM…AGNRSALRYH (85 aa)). Asn87 and Asn98 each carry an N-linked (GlcNAc...) asparagine glycan. A helical transmembrane segment spans residues 106 to 126 (IITLLLVAFVLYPVSLALSAA). The Cytoplasmic segment spans residues 127-131 (RSRWY). A helical membrane pass occupies residues 132–152 (LPLLFVNLCICISSVMALSVF). The Lumenal segment spans residues 153-170 (KNTFPEEDWYAHNIYGTT). A helical membrane pass occupies residues 171-191 (SVLLLVFMLVHFFAAVLSVPV). Topologically, residues 192–322 (SLASKKEYRP…LSCVANVVFH (131 aa)) are cytoplasmic. The disordered stretch occupies residues 216–274 (MVNSARGSPSPSSNRDTLFSLSSDTTTATATNNNKRRRAEGEDEGDNTSNHDTLRDEDY). Ser219 carries the post-translational modification Phosphoserine. A compositionally biased stretch (polar residues) spans 220-239 (ARGSPSPSSNRDTLFSLSSD). A Glycyl lysine isopeptide (Lys-Gly) (interchain with G-Cter in ubiquitin) cross-link involves residue Lys250. Residues 323 to 343 (MLTYPLFMYIFVDLIIGFAVG) form a helical membrane-spanning segment. Residues 344 to 351 (NLLGKGIR) lie on the Lumenal side of the membrane. The helical transmembrane segment at 352 to 372 (IFNLLAHWIKGGVFFTLGVVS) threads the bilayer. Over 373-407 (LARYCGFAAKYGWAWNNISFTSQLTQTRSSNLLFR) the chain is Cytoplasmic. Residues 408–428 (FAPAGTFTMEFVESFLIFFYG) traverse the membrane as a helical segment. Residues 429–451 (STNIFLEHLAGNGGAWTAKDLQH) lie on the Lumenal side of the membrane. The helical transmembrane segment at 452–472 (VSIAFMFIGTGLCGLLTEYKL) threads the bilayer. Residues 473 to 529 (NHWRFEHARKRPQTDVVAATPGYSPNPFPAFTIFWTGILMSQHAQSSQFSTTIHTQW) are Cytoplasmic-facing. Residues 530 to 550 (GYLLSYGSFFRLLTFLILFLV) traverse the membrane as a helical segment. Residues 551–598 (PNTNSAASKPFTELITSFCLLCGGLVFMESTDQSIEAMEYRGFTPMFT) are Lumenal-facing. Residues 599 to 619 (FNLSVGFVSLLMAWEMILFIW) form a helical membrane-spanning segment. Topologically, residues 620-631 (KDWLIKTRKTSL) are cytoplasmic.

To S.pombe SpBC3B8.06.

The protein resides in the membrane. This is an uncharacterized protein from Saccharomyces cerevisiae (strain ATCC 204508 / S288c) (Baker's yeast).